The following is a 960-amino-acid chain: FYVE, RhoGEF and PH domain-containing protein 1 (960 aa).

Disordered stretches follow at residues M1–A210 and A226–P355. S48 bears the Phosphoserine mark. Positions P125–S135 are enriched in basic and acidic residues. Composition is skewed to pro residues over residues P137–S149, G156–P165, and V173–A190. The short motif at P171–P187 is the SH3-binding element. Phosphoserine is present on S205. Residues A231–P251 show a composition bias toward pro residues. The span at R273 to G284 shows a compositional bias: basic and acidic residues. The segment covering I285–S294 has biased composition (low complexity). Positions V335 to K350 are enriched in acidic residues. In terms of domain architecture, DH spans K372–A560. The PH 1 domain maps to E589–L688. The disordered stretch occupies residues N701–T725. At T710 the chain carries Phosphothreonine. S714 is modified (phosphoserine). The FYVE-type zinc finger occupies E729 to H789. 8 residues coordinate Zn(2+): C735, C738, C752, C755, C760, C763, C781, and C784. In terms of domain architecture, PH 2 spans N820–R920. Residues D922 to T960 form a disordered region.

In terms of assembly, interacts with DBNL/ABP1 and CTTN. Binds CDC42. May interact with CCPG1.

The protein localises to the cytoplasm. Its subcellular location is the cell projection. It is found in the lamellipodium. The protein resides in the ruffle. It localises to the cytoskeleton. Functionally, activates CDC42, a member of the Ras-like family of Rho- and Rac proteins, by exchanging bound GDP for free GTP. Plays a role in regulating the actin cytoskeleton and cell shape. This Mus musculus (Mouse) protein is FYVE, RhoGEF and PH domain-containing protein 1 (Fgd1).